Reading from the N-terminus, the 393-residue chain is S-adenosylmethionine synthase (393 aa).

Position 16 (His16) interacts with ATP. Asp18 provides a ligand contact to Mg(2+). K(+) is bound at residue Glu44. 2 residues coordinate L-methionine: Glu57 and Gln100. The tract at residues 100 to 110 is flexible loop; the sequence is QSNDIAQGVDH. Residues 167–169, 238–239, Asp247, 253–254, Ala270, and Lys274 each bind ATP; these read DAK, RF, and RK. L-methionine is bound at residue Asp247. Residue Lys278 coordinates L-methionine.

Belongs to the AdoMet synthase family. Homotetramer; dimer of dimers. It depends on Mg(2+) as a cofactor. Requires K(+) as cofactor.

The protein localises to the cytoplasm. The enzyme catalyses L-methionine + ATP + H2O = S-adenosyl-L-methionine + phosphate + diphosphate. It participates in amino-acid biosynthesis; S-adenosyl-L-methionine biosynthesis; S-adenosyl-L-methionine from L-methionine: step 1/1. Functionally, catalyzes the formation of S-adenosylmethionine (AdoMet) from methionine and ATP. The overall synthetic reaction is composed of two sequential steps, AdoMet formation and the subsequent tripolyphosphate hydrolysis which occurs prior to release of AdoMet from the enzyme. This Polaromonas sp. (strain JS666 / ATCC BAA-500) protein is S-adenosylmethionine synthase.